The primary structure comprises 338 residues: Fructose-1,6-bisphosphatase class 1 (338 aa).

Positions 92, 115, 117, and 118 each coordinate Mg(2+). Residues 118–121 (DGSS), Asn-211, Tyr-244, 262–264 (YLY), and Lys-274 each bind substrate. Glu-280 is a binding site for Mg(2+).

It belongs to the FBPase class 1 family. As to quaternary structure, homotetramer. Mg(2+) serves as cofactor.

It localises to the cytoplasm. It carries out the reaction beta-D-fructose 1,6-bisphosphate + H2O = beta-D-fructose 6-phosphate + phosphate. It participates in carbohydrate biosynthesis; gluconeogenesis. This chain is Fructose-1,6-bisphosphatase class 1, found in Vibrio parahaemolyticus serotype O3:K6 (strain RIMD 2210633).